Here is a 202-residue protein sequence, read N- to C-terminus: Orotate phosphoribosyltransferase (202 aa).

Residues K93 and 113–121 (EDIITTGGS) contribute to the 5-phospho-alpha-D-ribose 1-diphosphate site. Orotate-binding residues include T117 and R145.

This sequence belongs to the purine/pyrimidine phosphoribosyltransferase family. PyrE subfamily. As to quaternary structure, homodimer. Mg(2+) serves as cofactor.

It catalyses the reaction orotidine 5'-phosphate + diphosphate = orotate + 5-phospho-alpha-D-ribose 1-diphosphate. It functions in the pathway pyrimidine metabolism; UMP biosynthesis via de novo pathway; UMP from orotate: step 1/2. Catalyzes the transfer of a ribosyl phosphate group from 5-phosphoribose 1-diphosphate to orotate, leading to the formation of orotidine monophosphate (OMP). This Campylobacter hominis (strain ATCC BAA-381 / DSM 21671 / CCUG 45161 / LMG 19568 / NCTC 13146 / CH001A) protein is Orotate phosphoribosyltransferase.